Reading from the N-terminus, the 249-residue chain is 4-hydroxy-tetrahydrodipicolinate reductase (249 aa).

NAD(+) is bound by residues Asp-32, 74–76 (GTT), and 99–102 (SANY). His-134 serves as the catalytic Proton donor/acceptor. (S)-2,3,4,5-tetrahydrodipicolinate is bound at residue His-135. Lys-138 serves as the catalytic Proton donor. 144–145 (GT) contributes to the (S)-2,3,4,5-tetrahydrodipicolinate binding site.

This sequence belongs to the DapB family.

It is found in the cytoplasm. It carries out the reaction (S)-2,3,4,5-tetrahydrodipicolinate + NAD(+) + H2O = (2S,4S)-4-hydroxy-2,3,4,5-tetrahydrodipicolinate + NADH + H(+). The enzyme catalyses (S)-2,3,4,5-tetrahydrodipicolinate + NADP(+) + H2O = (2S,4S)-4-hydroxy-2,3,4,5-tetrahydrodipicolinate + NADPH + H(+). It functions in the pathway amino-acid biosynthesis; L-lysine biosynthesis via DAP pathway; (S)-tetrahydrodipicolinate from L-aspartate: step 4/4. In terms of biological role, catalyzes the conversion of 4-hydroxy-tetrahydrodipicolinate (HTPA) to tetrahydrodipicolinate. In Chlorobaculum tepidum (strain ATCC 49652 / DSM 12025 / NBRC 103806 / TLS) (Chlorobium tepidum), this protein is 4-hydroxy-tetrahydrodipicolinate reductase.